The chain runs to 343 residues: MMKINLYKLLCFICVIFLLHKNVVRSGDNMKYNDMKGLDDLSKLNDDQVKDILGLKIDGAKERIEKLFHLIDKNNDKEITEEELNTWSSFLKNEIFLKQVQAEMGQIDSDKDGFISLNELNDAFAQNLDAKEVEKHSEGLLKRFQIVDKDKDGKLSINEVGLLIDPMKDEELKELEINEILEHHDVNKDGKISLDEFKQTRSDESSGVKKDDEMALDDFNFFDANKDGFIDKEEIIKVYFDPAHESGAINVNEIKENIFEGKKITYDLWNEKALKIAVTSLTDYGDVIRYPEDFKLDIGKNVILPTARSRAFEDDDMDADNTEDDKDEADDASQQKSPAIDEL.

An N-terminal signal peptide occupies residues 1–26; sequence MMKINLYKLLCFICVIFLLHKNVVRS. EF-hand domains lie at 59-94, 95-130, 135-170, 172-207, and 210-245; these read GAKE…LKNE, IFLK…NLDA, KHSE…MKDE, LKEL…ESSG, and KDDE…PAHE. Ca(2+) contacts are provided by aspartate 72, asparagine 74, aspartate 76, glutamate 78, glutamate 83, aspartate 108, aspartate 110, aspartate 112, glutamate 119, aspartate 148, aspartate 150, aspartate 152, lysine 154, glutamate 159, aspartate 185, asparagine 187, aspartate 189, lysine 191, glutamate 196, aspartate 223, asparagine 225, aspartate 227, and glutamate 234. The segment covering 313–331 has biased composition (acidic residues); it reads EDDDMDADNTEDDKDEADD. The interval 313-343 is disordered; the sequence is EDDDMDADNTEDDKDEADDASQQKSPAIDEL.

Belongs to the CREC family.

It is found in the endoplasmic reticulum. Its function is as follows. Calcium-binding protein. Required for schizont to ring transition. Required for the breakdown of the parasitophorous vacuole membrane during egress. Required for the proteolytic maturation of apical membrane antigen 1 (AMA-1) during egress. Required for the proteolytic maturation of subtilisin-like protease 1 (SUB1) during egress. Required for the proteolytic maturation of plasmepsin X (PMX) during egress. The protein is Endoplasmic reticulum-resident calcium binding protein of Plasmodium falciparum (isolate 3D7).